The chain runs to 158 residues: Transcription elongation factor GreA (158 aa).

It belongs to the GreA/GreB family.

In terms of biological role, necessary for efficient RNA polymerase transcription elongation past template-encoded arresting sites. The arresting sites in DNA have the property of trapping a certain fraction of elongating RNA polymerases that pass through, resulting in locked ternary complexes. Cleavage of the nascent transcript by cleavage factors such as GreA or GreB allows the resumption of elongation from the new 3'terminus. GreA releases sequences of 2 to 3 nucleotides. This Salmonella typhi protein is Transcription elongation factor GreA.